The primary structure comprises 233 residues: Probable septum site-determining protein MinC (233 aa).

The interval 104 to 124 (QKMATPEPAPAPAPVVDPNAP) is disordered.

It belongs to the MinC family. In terms of assembly, interacts with MinD and FtsZ.

Functionally, cell division inhibitor that blocks the formation of polar Z ring septums. Rapidly oscillates between the poles of the cell to destabilize FtsZ filaments that have formed before they mature into polar Z rings. Prevents FtsZ polymerization. This is Probable septum site-determining protein MinC from Serratia proteamaculans (strain 568).